The chain runs to 380 residues: DNA replication and repair protein RecF (380 aa).

30–37 (GQNGQGKT) provides a ligand contact to ATP.

It belongs to the RecF family.

It is found in the cytoplasm. In terms of biological role, the RecF protein is involved in DNA metabolism; it is required for DNA replication and normal SOS inducibility. RecF binds preferentially to single-stranded, linear DNA. It also seems to bind ATP. This chain is DNA replication and repair protein RecF, found in Myxococcus xanthus (strain DK1622).